Reading from the N-terminus, the 476-residue chain is Angiotensinogen (476 aa).

Residues 1–24 (MAPAGLSLGAAILCLLAWAGLAAG) form the signal peptide. Residues C42 and C161 are joined by a disulfide bond. N295, N319, N362, and N401 each carry an N-linked (GlcNAc...) asparagine glycan.

This sequence belongs to the serpin family. In response to low blood pressure, the enzyme renin/REN cleaves angiotensinogen to produce angiotensin-1. Angiotensin-1 is a substrate of ACE (angiotensin converting enzyme) that removes a dipeptide to yield the physiologically active peptide angiotensin-2. Angiotensin-1 and angiotensin-2 can be further processed to generate angiotensin-3, angiotensin-4. Angiotensin 1-9 is cleaved from angiotensin-1 by ACE2 and can be further processed by ACE to produce angiotensin 1-7, angiotensin 1-5 and angiotensin 1-4. Angiotensin 1-7 has also been proposed to be cleaved from angiotensin-2 by ACE2 or from angiotensin-1 by MME (neprilysin). Post-translationally, the disulfide bond is labile. Angiotensinogen is present in the circulation in a near 40:60 ratio with the oxidized disulfide-bonded form, which preferentially interacts with receptor-bound renin.

It localises to the secreted. Functionally, essential component of the renin-angiotensin system (RAS), a potent regulator of blood pressure, body fluid and electrolyte homeostasis. Its function is as follows. Acts directly on vascular smooth muscle as a potent vasoconstrictor, affects cardiac contractility and heart rate through its action on the sympathetic nervous system, and alters renal sodium and water absorption through its ability to stimulate the zona glomerulosa cells of the adrenal cortex to synthesize and secrete aldosterone. Acts by binding to angiotensin receptors AGTR1 and AGTR2. Also binds the DEAR/FBXW7-AS1 receptor. In terms of biological role, stimulates aldosterone release. Is a ligand for the G-protein coupled receptor MAS1. Has vasodilator and antidiuretic effects. Has an antithrombotic effect that involves MAS1-mediated release of nitric oxide from platelets. The sequence is that of Angiotensinogen (AGT) from Bos taurus (Bovine).